A 437-amino-acid polypeptide reads, in one-letter code: MTVSFPFPRIPDPGVPVLVAFSGGLDSTVLLHCLASQPTQRIHGLEAIHIHHGLHEHADAWTAHCAAFCTQHYIRLHIARVHVSHNSGQGLEAAARTARRAAFAHTLQHGHYLALAHHCDDQAETWLLRALRGSCDGLAAMRPLTPFAAGHLWRPLLTHSRAQLLDYAQQQHLDWIEDSSNADLRHDRNFLRIHVLPLLHQRWPQATAVLARNAALAAANADLLNAEDAVLLPDLLDPDGALDINALTAHPPARRARLLRAWCARAGAPPLPERGVNIIERELLPARHDSAACFTWSHTEIRRWRLRLYLHRPQPPWPPDWQPLWSGITPLILPDGGQLHLESTDHDTVPGFPHPLCVRARRGGERLILPGRTHSHPLKHLLQDIGIPPWRRASMPLLCDGEQILAAGDALLAAPLVTWLHAHRLKLRWQSHNNTCI.

Residue 22–27 (SGGLDS) participates in ATP binding.

Belongs to the tRNA(Ile)-lysidine synthase family.

It localises to the cytoplasm. The enzyme catalyses cytidine(34) in tRNA(Ile2) + L-lysine + ATP = lysidine(34) in tRNA(Ile2) + AMP + diphosphate + H(+). Its function is as follows. Ligates lysine onto the cytidine present at position 34 of the AUA codon-specific tRNA(Ile) that contains the anticodon CAU, in an ATP-dependent manner. Cytidine is converted to lysidine, thus changing the amino acid specificity of the tRNA from methionine to isoleucine. This chain is tRNA(Ile)-lysidine synthase, found in Xylella fastidiosa (strain 9a5c).